A 302-amino-acid chain; its full sequence is Light-independent protochlorophyllide reductase iron-sulfur ATP-binding protein (302 aa).

Residues 46-51 (GIGKST) and lysine 75 contribute to the ATP site. Serine 50 is a Mg(2+) binding site. [4Fe-4S] cluster is bound by residues cysteine 131 and cysteine 165. 216 to 217 (NR) contributes to the ATP binding site.

The protein belongs to the NifH/BchL/ChlL family. As to quaternary structure, homodimer. Protochlorophyllide reductase is composed of three subunits; BchL, BchN and BchB. The cofactor is [4Fe-4S] cluster.

The catalysed reaction is chlorophyllide a + oxidized 2[4Fe-4S]-[ferredoxin] + 2 ADP + 2 phosphate = protochlorophyllide a + reduced 2[4Fe-4S]-[ferredoxin] + 2 ATP + 2 H2O. It participates in porphyrin-containing compound metabolism; bacteriochlorophyll biosynthesis (light-independent). Component of the dark-operative protochlorophyllide reductase (DPOR) that uses Mg-ATP and reduced ferredoxin to reduce ring D of protochlorophyllide (Pchlide) to form chlorophyllide a (Chlide). This reaction is light-independent. The L component serves as a unique electron donor to the NB-component of the complex, and binds Mg-ATP. The chain is Light-independent protochlorophyllide reductase iron-sulfur ATP-binding protein from Methylocella silvestris (strain DSM 15510 / CIP 108128 / LMG 27833 / NCIMB 13906 / BL2).